The following is a 115-amino-acid chain: Non-specific lipid-transfer protein 3 (115 aa).

An N-terminal signal peptide occupies residues 1 to 23; sequence MAFALRFFTCLVLTVCIVASVDA. 4 disulfides stabilise this stretch: cysteine 27-cysteine 74, cysteine 37-cysteine 51, cysteine 52-cysteine 97, and cysteine 72-cysteine 111.

It belongs to the plant LTP family.

Plant non-specific lipid-transfer proteins transfer phospholipids as well as galactolipids across membranes. May play a role in wax or cutin deposition in the cell walls of expanding epidermal cells and certain secretory tissues. This Arabidopsis thaliana (Mouse-ear cress) protein is Non-specific lipid-transfer protein 3 (LTP3).